The primary structure comprises 147 residues: Phosphoribosyl-AMP cyclohydrolase (147 aa).

Mg(2+) is bound at residue aspartate 91. Cysteine 92 contacts Zn(2+). Residues aspartate 93 and aspartate 95 each coordinate Mg(2+). Residues cysteine 109 and cysteine 116 each contribute to the Zn(2+) site.

The protein belongs to the PRA-CH family. As to quaternary structure, homodimer. It depends on Mg(2+) as a cofactor. Requires Zn(2+) as cofactor.

It localises to the cytoplasm. It carries out the reaction 1-(5-phospho-beta-D-ribosyl)-5'-AMP + H2O = 1-(5-phospho-beta-D-ribosyl)-5-[(5-phospho-beta-D-ribosylamino)methylideneamino]imidazole-4-carboxamide. It participates in amino-acid biosynthesis; L-histidine biosynthesis; L-histidine from 5-phospho-alpha-D-ribose 1-diphosphate: step 3/9. In terms of biological role, catalyzes the hydrolysis of the adenine ring of phosphoribosyl-AMP. In Rhodopseudomonas palustris (strain BisA53), this protein is Phosphoribosyl-AMP cyclohydrolase.